A 389-amino-acid chain; its full sequence is Gibberellin 20 oxidase 2 (389 aa).

Over residues 1–17 the composition is skewed to pro residues; it reads MVAEHPTPPQPHQPPPM. A disordered region spans residues 1 to 23; the sequence is MVAEHPTPPQPHQPPPMDSTAGS. The region spanning 224–324 is the Fe2OG dioxygenase domain; sequence DSSSIMRCNY…RRSLAFFLCP (101 aa). Fe cation contacts are provided by His-249, Asp-251, and His-305. The active site involves Arg-315.

It belongs to the iron/ascorbate-dependent oxidoreductase family. GA20OX subfamily. It depends on Fe cation as a cofactor. L-ascorbate serves as cofactor.

The catalysed reaction is gibberellin A12 + 2 2-oxoglutarate + 3 O2 + H(+) = gibberellin A9 + 2 succinate + 3 CO2 + 2 H2O. It catalyses the reaction gibberellin A53 + 2 2-oxoglutarate + 3 O2 + H(+) = gibberellin A20 + 2 succinate + 3 CO2 + 2 H2O. In terms of biological role, key oxidase enzyme in the biosynthesis of gibberellin that catalyzes the conversion of GA53 to GA20 via a three-step oxidation at C-20 of the GA skeleton. The polypeptide is Gibberellin 20 oxidase 2 (20ox2) (Oryza sativa subsp. indica (Rice)).